Consider the following 690-residue polypeptide: Glycine--tRNA ligase beta subunit (690 aa).

It belongs to the class-II aminoacyl-tRNA synthetase family. In terms of assembly, tetramer of two alpha and two beta subunits.

Its subcellular location is the cytoplasm. The catalysed reaction is tRNA(Gly) + glycine + ATP = glycyl-tRNA(Gly) + AMP + diphosphate. The sequence is that of Glycine--tRNA ligase beta subunit from Desulfitobacterium hafniense (strain DSM 10664 / DCB-2).